Here is a 218-residue protein sequence, read N- to C-terminus: Alkylmercury lyase (218 aa).

This sequence belongs to the MerB family.

It carries out the reaction an alkylmercury + H(+) = an alkane + Hg(2+). Cleaves the carbon-mercury bond of organomercurials such as phenylmercuric acetate. One product is Hg(2+), which is subsequently detoxified by the mercuric reductase. The chain is Alkylmercury lyase (merB1) from Bacillus cereus.